The primary structure comprises 448 residues: Trigger factor (448 aa).

One can recognise a PPIase FKBP-type domain in the interval 172–257 (GDRVTVDFVG…MKKIEWPHLP (86 aa)).

The protein belongs to the FKBP-type PPIase family. Tig subfamily.

The protein localises to the cytoplasm. The enzyme catalyses [protein]-peptidylproline (omega=180) = [protein]-peptidylproline (omega=0). Its function is as follows. Involved in protein export. Acts as a chaperone by maintaining the newly synthesized protein in an open conformation. Functions as a peptidyl-prolyl cis-trans isomerase. This chain is Trigger factor, found in Paraburkholderia xenovorans (strain LB400).